The chain runs to 580 residues: Negative elongation factor B (580 aa).

An N6-acetyllysine modification is found at K519. The segment at 552-580 (DHRKPSPTQAAETPALDLPLPSVPAPATL) is disordered. Residue S557 is modified to Phosphoserine.

It belongs to the NELF-B family. As to quaternary structure, the NELF complex is composed of NELFA, NELFB, NELFCD and NELFE; the N-terminus of NELFB binds to the NELFA:NELFCD subcomplex. Binds RNA which may help to stabilize the NELF complex on nucleic acid Interacts with the first BRCT repeat of BRCA1. Interacts with KIAA1191. Isoform 1 and isoform 2 interact with NELFA, NELFCD and NELFE. In terms of tissue distribution, isoform 1 is expressed in the kidney, liver, adipose and lung. Isoform 2 is widely expressed.

Its subcellular location is the nucleus. Its function is as follows. Essential component of the NELF complex, a complex that negatively regulates the elongation of transcription by RNA polymerase II (Pol II). The NELF complex, which acts via an association with the DSIF complex and causes transcriptional pausing, is counteracted by the P-TEFb kinase complex. May be able to induce chromatin unfolding. Essential for early embryogenesis; plays an important role in maintaining the undifferentiated state of embryonic stem cells (ESCs) by preventing unscheduled expression of developmental genes. Plays a key role in establishing the responsiveness of stem cells to developmental cues; facilitates plasticity and cell fate commitment in ESCs by establishing the appropriate expression level of signaling molecules. Supports the transcription of genes involved in energy metabolism in cardiomyocytes; facilitates the association of transcription initiation factors with the promoters of the metabolism-related genes. The polypeptide is Negative elongation factor B (Nelfb) (Mus musculus (Mouse)).